The chain runs to 454 residues: MTNGDSSSSALTDNERAVLDDIEAQGIDFLRLQFTDILGTVKNVSIPAHQAEKAFTEGIYFDGSSIEGFVRIQESDMRLDPDPETFAVLPWRSNGDGGSARLICDVVDREGNAFAGGPRQVLKNVLARADDMGYSVSIGPEPEFFLFEKDDDGNATTTAHDQGGYFDLAPKDLASDIRREIIFTLEAMGFEIEASHHEVARGQHEINFKYDDALTTADNIATFRAVVRAVAEQHDVHATFMPKPIGEINGSGMHSHISLFDEDGENVFADNDDEFNLSETAYQFMGGVLEHAPAFTAVTNPTVNSYKRLVPGYEAPVYIAWSGVNRSALIRVPDAAGVSARFEIRSPDPSCNPYLALAAVIAAGLDGIDTDADPGDAVREDIYEFDEDKRDAYGIDTLPGHLGDAVTALESDPVMQDALGEHVCEKFAEAKRHEYAEYKASVSEWETDRYLEKF.

Positions 25 to 111 (QGIDFLRLQF…LICDVVDREG (87 aa)) constitute a GS beta-grasp domain. The GS catalytic domain maps to 118–454 (PRQVLKNVLA…WETDRYLEKF (337 aa)). Glu141 and Glu143 together coordinate Mg(2+). Glu193 serves as a coordination point for ATP. Residues Glu198 and Glu205 each coordinate Mg(2+). L-glutamate contacts are provided by residues 249 to 250 (NG) and Gly250. His254 serves as a coordination point for Mg(2+). ATP is bound by residues 256 to 258 (HIS) and Ser258. L-glutamate-binding residues include Arg308, Glu314, and Arg326. ATP is bound by residues Arg326 and Arg331. Mg(2+) is bound at residue Glu343. Arg345 is an L-glutamate binding site.

The protein belongs to the glutamine synthetase family. Oligomer of 12 subunits arranged in the form of two hexagons. In its feedback-inhibited form, interacts with TnrA in order to block its DNA-binding activity. Requires Mg(2+) as cofactor.

The protein localises to the cytoplasm. It catalyses the reaction L-glutamate + NH4(+) + ATP = L-glutamine + ADP + phosphate + H(+). Its activity is regulated as follows. Inhibited by glutamine. Its function is as follows. Glutamine synthetase (GS) is an unusual multitasking protein that functions as an enzyme, a transcription coregulator, and a chaperone in ammonium assimilation and in the regulation of genes involved in nitrogen metabolism. It catalyzes the ATP-dependent biosynthesis of glutamine from glutamate and ammonia. Feedback-inhibited GlnA also interacts with and regulates the activity of the transcriptional regulator TnrA. During nitrogen limitation, TnrA is in its DNA-binding active state and turns on the transcription of genes required for nitrogen assimilation. Under conditions of nitrogen excess, feedback-inhibited GlnA forms a stable complex with TnrA, which inhibits its DNA-binding activity. In contrast, feedback-inhibited GlnA acts as a chaperone to stabilize the DNA-binding activity of GlnR, which represses the transcription of nitrogen assimilation genes. This is Glutamine synthetase from Halobacterium salinarum (strain ATCC 700922 / JCM 11081 / NRC-1) (Halobacterium halobium).